A 720-amino-acid chain; its full sequence is MDVSYLLDSLNDKQREAVAAPRSNLLVLAGAGSGKTRVLVHRIAWLMSVENCSPYSIMAVTFTNKAAAEMRHRIGQLMGTSQGGMWVGTFHGLAHRLLRAHHMDANLPQDFQILDSEDQLRLLKRLIKAMNLDEKQWPPRQAMWYINSQKDEGLRPHHIQSYGNPVEQTWQKVYQAYQEACDRAGLVDFAELLLRAHELWLNKPHILQHYRERFTNILVDEFQDTNNIQYAWIRLLAGDTGKVMIVGDDDQSIYGWRGAQVENIQRFLNDFPGAETIRLEQNYRSTSNILSAANALIENNNGRLGKKLWTDGADGEPISLYCAFNELDEARFVVNRIKTWQDNGGALAECAILYRSNAQSRVLEEALLQASMPYRIYGGMRFFERQEIKDALSYLRLIANRNDDAAFERVVNTPTRGIGDRTLDVVRQTSRDRQLTLWQACRELLQEKALAGRAASALQRFMELIDALAQETADMPLHVQTDRVIKDSGLRTMYEQEKGEKGQTRIENLEELVTATRQFSYNEEDEDLMPLQAFLSHAALEAGEGQADTWQDAVQLMTLHSAKGLEFPQVFIVGMEEGMFPSQMSLDEGGRLEEERRLAYVGVTRAMQKLTLTYAETRRLYGKEVYHRPSRFIGELPEECVEEVRLRATVSRPVSHQRMGTPMVENDSGYKLGQRVRHAKFGEGTIVNMEGSGEHSRLQVAFQGQGIKWLVAAYARLESV.

In terms of domain architecture, UvrD-like helicase ATP-binding spans 8 to 286 (DSLNDKQREA…IRLEQNYRST (279 aa)). ATP contacts are provided by residues 32–37 (GSGKTR) and Arg284. Residues 287 to 564 (SNILSAANAL…QLMTLHSAKG (278 aa)) enclose the UvrD-like helicase C-terminal domain.

Belongs to the helicase family. UvrD subfamily.

The catalysed reaction is Couples ATP hydrolysis with the unwinding of duplex DNA by translocating in the 3'-5' direction.. It catalyses the reaction ATP + H2O = ADP + phosphate + H(+). In terms of biological role, a helicase with DNA-dependent ATPase activity. Unwinds DNA duplexes with 3'-5' polarity. Translocates on single-stranded DNA with 3'-5' polarity. Initiates unwinding more efficiently from a nicked substrate than double-stranded DNA. Involved in the post-incision events of nucleotide excision repair and methyl-directed mismatch repair, and probably also in repair of alkylated DNA. The chain is DNA helicase II from Escherichia coli (strain K12).